The chain runs to 155 residues: NADPH-dependent 7-cyano-7-deazaguanine reductase (155 aa).

Residue cysteine 53 is the Thioimide intermediate of the active site. Aspartate 60 serves as the catalytic Proton donor. Substrate is bound by residues 75–77 and 94–95; these read VES and HE.

The protein belongs to the GTP cyclohydrolase I family. QueF type 1 subfamily.

The protein localises to the cytoplasm. It catalyses the reaction 7-aminomethyl-7-carbaguanine + 2 NADP(+) = 7-cyano-7-deazaguanine + 2 NADPH + 3 H(+). It participates in tRNA modification; tRNA-queuosine biosynthesis. Its function is as follows. Catalyzes the NADPH-dependent reduction of 7-cyano-7-deazaguanine (preQ0) to 7-aminomethyl-7-deazaguanine (preQ1). This chain is NADPH-dependent 7-cyano-7-deazaguanine reductase, found in Brucella anthropi (strain ATCC 49188 / DSM 6882 / CCUG 24695 / JCM 21032 / LMG 3331 / NBRC 15819 / NCTC 12168 / Alc 37) (Ochrobactrum anthropi).